A 191-amino-acid chain; its full sequence is Cathelicidin-related peptide Oh-Cath (191 aa).

A signal peptide spans 1–22 (MEGFFWKTLLVVGALAIGGTSS). Positions 23 to 161 (LPHKPLTYEE…DQPRRVKRFK (139 aa)) are excised as a propeptide. Intrachain disulfides connect C81/C92 and C103/C120. The span at 125-151 (EEEEQKQEEGNEEEKEVEKEEKEEDEK) shows a compositional bias: acidic residues. The interval 125 to 154 (EEEEQKQEEGNEEEKEVEKEEKEEDEKDQP) is disordered.

The protein belongs to the cathelicidin family. Expressed by the venom gland.

The protein localises to the secreted. It is found in the target cell membrane. Functionally, potent antimicrobial peptide against Gram-negative (MIC=0.25 ug/ml against E.coli ATCC 25922, MIC=0.5 ug/ml against P.aeruginosa) and Gram-positive bacteria (MIC=64 ug/ml against E.faecalis, MIC=64 ug/ml against S.aureus). Adopts an amphipathic alpha helical conformation, that may allow to partition into the target membrane. Low hemolytic activities have been observed on mammalian cells. The polypeptide is Cathelicidin-related peptide Oh-Cath (Ophiophagus hannah (King cobra)).